The primary structure comprises 309 residues: Aspartate carbamoyltransferase catalytic subunit (309 aa).

Residues Arg-59 and Thr-60 each coordinate carbamoyl phosphate. Lys-87 contacts L-aspartate. Arg-109, His-139, and Gln-142 together coordinate carbamoyl phosphate. Residues Arg-172 and Arg-224 each coordinate L-aspartate. 2 residues coordinate carbamoyl phosphate: Ala-265 and Pro-266.

This sequence belongs to the aspartate/ornithine carbamoyltransferase superfamily. ATCase family. As to quaternary structure, heterododecamer (2C3:3R2) of six catalytic PyrB chains organized as two trimers (C3), and six regulatory PyrI chains organized as three dimers (R2).

The catalysed reaction is carbamoyl phosphate + L-aspartate = N-carbamoyl-L-aspartate + phosphate + H(+). It functions in the pathway pyrimidine metabolism; UMP biosynthesis via de novo pathway; (S)-dihydroorotate from bicarbonate: step 2/3. Catalyzes the condensation of carbamoyl phosphate and aspartate to form carbamoyl aspartate and inorganic phosphate, the committed step in the de novo pyrimidine nucleotide biosynthesis pathway. The polypeptide is Aspartate carbamoyltransferase catalytic subunit (Streptococcus uberis (strain ATCC BAA-854 / 0140J)).